The following is a 609-amino-acid chain: 1-deoxy-D-xylulose-5-phosphate synthase (609 aa).

Thiamine diphosphate is bound by residues histidine 77 and 118 to 120 (GHS). Aspartate 149 is a Mg(2+) binding site. Thiamine diphosphate-binding positions include 150-151 (GA), asparagine 178, tyrosine 259, and glutamate 342. Asparagine 178 is a binding site for Mg(2+).

It belongs to the transketolase family. DXPS subfamily. Homodimer. The cofactor is Mg(2+). Requires thiamine diphosphate as cofactor.

It catalyses the reaction D-glyceraldehyde 3-phosphate + pyruvate + H(+) = 1-deoxy-D-xylulose 5-phosphate + CO2. It functions in the pathway metabolic intermediate biosynthesis; 1-deoxy-D-xylulose 5-phosphate biosynthesis; 1-deoxy-D-xylulose 5-phosphate from D-glyceraldehyde 3-phosphate and pyruvate: step 1/1. Catalyzes the acyloin condensation reaction between C atoms 2 and 3 of pyruvate and glyceraldehyde 3-phosphate to yield 1-deoxy-D-xylulose-5-phosphate (DXP). This Listeria monocytogenes serotype 4b (strain CLIP80459) protein is 1-deoxy-D-xylulose-5-phosphate synthase.